Reading from the N-terminus, the 375-residue chain is E3 ubiquitin-protein ligase FANCL (375 aa).

At A2 the chain carries N-acetylalanine. The segment at 104 to 294 (LPPPPQFYSS…KDVLEIDFPA (191 aa)) is UBC-RWD region (URD). Zn(2+)-binding residues include C307, C310, C324, C329, H334, C337, C359, and C362. The RING-type; degenerate zinc finger occupies 307-363 (CGICYAYQLDGTIPDQVCDNSQCGQPFHQICLYEWLRGLLTSRQSFNIIFGECPYCS).

As to quaternary structure, interacts with GGN. Belongs to the multisubunit FA complex composed of FANCA, FANCB, FANCC, FANCE, FANCF, FANCG, FANCL/PHF9 and FANCM. The complex is not found in FA patients. In complex with FANCF, FANCA and FANCG, but not with FANCC, nor FANCE, interacts with HES1; this interaction may be essential for the stability and nuclear localization of FA core complex proteins. Interacts with FANCI. Directly interacts (via the RING-type zinc finger) with UBE2T and UBE2W. The RING-type zinc finger domain is monoubiquitinated in the presence of UBE2T and UBE2W.

It is found in the cytoplasm. Its subcellular location is the nucleus. It catalyses the reaction S-ubiquitinyl-[E2 ubiquitin-conjugating enzyme]-L-cysteine + [acceptor protein]-L-lysine = [E2 ubiquitin-conjugating enzyme]-L-cysteine + N(6)-ubiquitinyl-[acceptor protein]-L-lysine.. It participates in protein modification; protein ubiquitination. Its function is as follows. Ubiquitin ligase protein that mediates monoubiquitination of FANCD2 in the presence of UBE2T, a key step in the DNA damage pathway. Also mediates monoubiquitination of FANCI. May stimulate the ubiquitin release from UBE2W. May be required for proper primordial germ cell proliferation in the embryonic stage, whereas it is probably not needed for spermatogonial proliferation after birth. The chain is E3 ubiquitin-protein ligase FANCL (FANCL) from Homo sapiens (Human).